Consider the following 348-residue polypeptide: Phosphoribosylformylglycinamidine cyclo-ligase (348 aa).

It belongs to the AIR synthase family.

The protein resides in the cytoplasm. It carries out the reaction 2-formamido-N(1)-(5-O-phospho-beta-D-ribosyl)acetamidine + ATP = 5-amino-1-(5-phospho-beta-D-ribosyl)imidazole + ADP + phosphate + H(+). The protein operates within purine metabolism; IMP biosynthesis via de novo pathway; 5-amino-1-(5-phospho-D-ribosyl)imidazole from N(2)-formyl-N(1)-(5-phospho-D-ribosyl)glycinamide: step 2/2. The sequence is that of Phosphoribosylformylglycinamidine cyclo-ligase from Cereibacter sphaeroides (strain ATCC 17023 / DSM 158 / JCM 6121 / CCUG 31486 / LMG 2827 / NBRC 12203 / NCIMB 8253 / ATH 2.4.1.) (Rhodobacter sphaeroides).